Reading from the N-terminus, the 242-residue chain is MAAAAAAAGSSDSRKPAAHPPPRDFLVHVEAYLSRRDGVDKLLKISRYAARLALAAGPLPPAASARLKSFESSVGLSRKAFRLGKFVQNVNALRAHPHPPPAVALLAYGGEGVYYFLEQFVWLAKAGLLPAHLLPRLQRLSAWAELLGYVGSITIKLEEIGKLESSVKMRLKEGCREESDVVRTLRVKLLLKRMSVVQDVADAVMALGDVTDGKGLLGSSTLMASAGLLSALISAHKNWNSC.

Residues 1-22 (MAAAAAAAGSSDSRKPAAHPPP) are disordered. The Cytoplasmic segment spans residues 1 to 102 (MAAAAAAAGS…LRAHPHPPPA (102 aa)). Residues 103–123 (VALLAYGGEGVYYFLEQFVWL) traverse the membrane as a helical segment. The Lumenal portion of the chain corresponds to 124–214 (AKAGLLPAHL…MALGDVTDGK (91 aa)). A helical transmembrane segment spans residues 215–235 (GLLGSSTLMASAGLLSALISA). The Cytoplasmic portion of the chain corresponds to 236-242 (HKNWNSC).

It belongs to the peroxin-11 family. In terms of tissue distribution, expressed in seedlings, roots, leaf sheaths, spikelets and endosperm.

Its subcellular location is the peroxisome membrane. Functionally, involved in peroxisomal proliferation. The chain is Peroxisomal membrane protein 11-3 (PEX11-3) from Oryza sativa subsp. japonica (Rice).